Here is a 799-residue protein sequence, read N- to C-terminus: DISARM protein DrmE (799 aa).

The protein localises to the cytoplasm. In terms of biological role, component of antiviral defense system DISARM (defense island system associated with restriction-modification), composed of DrmE, DrmA, DrmB, DrmC and DrmMII. DISARM is probably a multi-gene restriction module, this subunit has an unknown function. Expression of DISARM in B.subtilis (strain BEST7003) confers resistance to phages Nf, phi29, phi105, phi3T, SPO1, SPR and SPP1. Protection is over 10(7)-fold against phi3T, 10(4)-10(5)-fold against Nf, phi29, phi105 and SPR, 100-fold against SPO1 and 10-fold against SPP1. DISARM does not interfere with phage adsorption, but instead interferes with (phi3T) DNA replication early in its cycle, preventing replication, circularization and lysogeny and probably causes phage DNA degradation (DNA is degraded in SPP1-infected cells). The protein is DISARM protein DrmE of Bacillus paralicheniformis (strain ATCC 9945a / NCIMB 11709 / CD-2).